Consider the following 173-residue polypeptide: MHWKMLLLLLLYYNAEASMCHRWSRAVLFPAAHRPKRSSSLPLNPVLQTSLEEVELLYEFLLAELEISPDLQISIKDEELASLRKASDFRTVCNNVIPKSIPDIRRLSASLSSHPGILKKEDFERTVLTLAYTAYRTALSHGHQKDIWAQSLVSLFQALRHDLMRSSQPGVPP.

A signal peptide spans methionine 1–alanine 17.

The protein belongs to the FAM180 family.

Its subcellular location is the secreted. This is Protein FAM180A (FAM180A) from Homo sapiens (Human).